A 698-amino-acid polypeptide reads, in one-letter code: Testis-specific gene 10 protein (698 aa).

The residue at position 163 (Ser163) is a Phosphoserine. The interval 556-689 is interaction with HIF1A; it reads QMANERISMQ…SPDRGLDRSL (134 aa). A compositionally biased stretch (polar residues) spans 659 to 670; it reads HMSSTMKPNTKC. The interval 659–685 is disordered; sequence HMSSTMKPNTKCHSPERAHHRSPDRGL. Positions 671–685 are enriched in basic and acidic residues; it reads HSPERAHHRSPDRGL. Position 688 is a phosphoserine (Ser688).

Belongs to the CEP135/TSGA10 family. As to quaternary structure, interacts with HIF1A. Post-translationally, processed into N-terminal 27-kDa and C-terminal 55-kDa fragments. As to expression, expressed in the testis, in spermatozoa (at protein level). Expressed in actively dividing fetal tissues, including sternum, intestine, limb, kidney and stomach.

The protein resides in the cytoplasm. Its subcellular location is the cytoskeleton. It is found in the microtubule organizing center. The protein localises to the centrosome. It localises to the centriole. In terms of biological role, plays a role in spermatogenesis. When overexpressed, prevents nuclear localization of HIF1A. The polypeptide is Testis-specific gene 10 protein (TSGA10) (Homo sapiens (Human)).